The sequence spans 162 residues: Endoribonuclease YbeY (162 aa).

Residues His-128, His-132, and His-138 each contribute to the Zn(2+) site.

Belongs to the endoribonuclease YbeY family. Zn(2+) serves as cofactor.

It localises to the cytoplasm. Functionally, single strand-specific metallo-endoribonuclease involved in late-stage 70S ribosome quality control and in maturation of the 3' terminus of the 16S rRNA. This is Endoribonuclease YbeY from Lactococcus lactis subsp. cremoris (strain SK11).